Consider the following 133-residue polypeptide: ATP synthase epsilon chain (133 aa).

This sequence belongs to the ATPase epsilon chain family. F-type ATPases have 2 components, CF(1) - the catalytic core - and CF(0) - the membrane proton channel. CF(1) has five subunits: alpha(3), beta(3), gamma(1), delta(1), epsilon(1). CF(0) has three main subunits: a, b and c.

The protein localises to the cell membrane. Its function is as follows. Produces ATP from ADP in the presence of a proton gradient across the membrane. This chain is ATP synthase epsilon chain, found in Geobacillus thermodenitrificans (strain NG80-2).